Reading from the N-terminus, the 385-residue chain is Multidrug resistance protein MdtE (385 aa).

Positions 1–20 (MNRRRKLLIPLLFCGAMLTA) are cleaved as a signal peptide. The N-palmitoyl cysteine moiety is linked to residue C21. C21 is lipidated: S-diacylglycerol cysteine.

It belongs to the membrane fusion protein (MFP) (TC 8.A.1) family. In terms of assembly, homotrimer. Part of the tripartite efflux system MdtEF-TolC, which is composed of an inner membrane transporter, MdtF, a membrane fusion protein, MdtE, and an outer membrane component, TolC. The complex forms a large protein conduit and can translocate molecules across both the inner and outer membranes.

Its subcellular location is the cell inner membrane. Its function is as follows. Part of the tripartite efflux system MdtEF-TolC, which confers resistance to various compounds. The protein is Multidrug resistance protein MdtE (mdtE) of Escherichia coli O6:H1 (strain CFT073 / ATCC 700928 / UPEC).